Reading from the N-terminus, the 216-residue chain is Protein Syd (216 aa).

It belongs to the Syd family.

It is found in the cell inner membrane. Its function is as follows. Interacts with the SecY protein in vivo. May bind preferentially to an uncomplexed state of SecY, thus functioning either as a chelating agent for excess SecY in the cell or as a regulatory factor that negatively controls the translocase function. This is Protein Syd from Shewanella baltica (strain OS185).